Here is a 177-residue protein sequence, read N- to C-terminus: Protein C2-DOMAIN ABA-RELATED 4 (177 aa).

One can recognise a C2 domain in the interval 4 to 118 (ACPARTSSLM…LRMQLDGLPS (115 aa)). Ca(2+) is bound by residues R33, D34, D39, D85, H86, D87, and D93.

It belongs to the plant CAR protein family. Dimers and oligomers. Binds to PYR/PYL/RCAR abscisic acid intracellular receptors in an ABA-independent manner, both at the plasma membrane and in the nucleus. Interacts directly with PYR1, PYL1, PYL4, PYL6 and PYL8. Binds phospholipids in a Ca(2+)-dependent manner. Interacts with YchF1. The cofactor is Ca(2+).

It localises to the cell membrane. It is found in the nucleus. The protein resides in the cytoplasm. The protein localises to the cytosol. Mediates the transient calcium-dependent interaction of PYR/PYL/RCAR abscisic acid (ABA) receptors with the plasma membrane and thus regulates ABA sensitivity. Stimulates the GTPase/ATPase activities of YchF1, and regulates its subcellular localization. Promotes tolerance towards salinity stress by limiting the accumulation of reactive oxygen species (ROS). Promotes resistance to bacterial pathogens (e.g. Xanthomonas oryzae pv. oryzae and P.syringae pv. tomato DC3000). Binds liposomes in the absence of exogenous Ca(2+), but this activity is enhanced in the presence of Ca(2+) and generates membrane curvature. This Arabidopsis thaliana (Mouse-ear cress) protein is Protein C2-DOMAIN ABA-RELATED 4.